Here is a 338-residue protein sequence, read N- to C-terminus: Beta-ketoacyl-[acyl-carrier-protein] synthase III (338 aa).

Catalysis depends on residues Cys119 and His261. Residues 262 to 266 are ACP-binding; the sequence is QANQR. Asn291 is an active-site residue.

Belongs to the thiolase-like superfamily. FabH family. Homodimer.

The protein resides in the cytoplasm. The catalysed reaction is malonyl-[ACP] + acetyl-CoA + H(+) = 3-oxobutanoyl-[ACP] + CO2 + CoA. It participates in lipid metabolism; fatty acid biosynthesis. In terms of biological role, catalyzes the condensation reaction of fatty acid synthesis by the addition to an acyl acceptor of two carbons from malonyl-ACP. Catalyzes the first condensation reaction which initiates fatty acid synthesis and may therefore play a role in governing the total rate of fatty acid production. Possesses both acetoacetyl-ACP synthase and acetyl transacylase activities. Its substrate specificity determines the biosynthesis of branched-chain and/or straight-chain of fatty acids. This Prochlorococcus marinus (strain SARG / CCMP1375 / SS120) protein is Beta-ketoacyl-[acyl-carrier-protein] synthase III.